The following is a 735-amino-acid chain: Peroxisomal multifunctional enzyme type 2 (735 aa).

The segment at 1 to 305 (MASPLRFDGR…VEVLHKVDSE (305 aa)) is (3R)-hydroxyacyl-CoA dehydrogenase. Residues 13–37 (LVTG…ALVI), Leu-21, and Asp-40 each bind NAD(+). The residue at position 46 (Lys-46) is an N6-acetyllysine; alternate. Lys-46 carries the post-translational modification N6-succinyllysine; alternate. Ser-52 carries the phosphoserine modification. N6-succinyllysine is present on residues Lys-57 and Lys-68. 75–76 (SV) contacts NAD(+). Lys-84 is subject to N6-succinyllysine. Asn-99 is an NAD(+) binding site. Substrate is bound at residue Ser-151. Tyr-164 functions as the Proton acceptor in the catalytic mechanism. NAD(+)-binding positions include 164–168 (YSAAK) and 196–199 (AGSR). Thr-265 is subject to Phosphothreonine. An N6-succinyllysine modification is found at Lys-275. Phosphoserine is present on residues Ser-304 and Ser-308. An enoyl-CoA hydratase 2 region spans residues 321–621 (SGFVGAVGHK…TQTPSEGGEL (301 aa)). Residue Lys-355 is modified to N6-succinyllysine. Position 405–406 (405–406 (HG)) interacts with (3R)-3-hydroxydecanoyl-CoA. Lys-423 bears the N6-succinyllysine mark. (3R)-3-hydroxydecanoyl-CoA is bound by residues Lys-434, 509–514 (DWNPLH), Gly-532, and Phe-562. The 117-residue stretch at 483 to 599 (VPNRPPDAVL…HETGDVVISN (117 aa)) folds into the MaoC-like domain. Lys-564 is modified (N6-acetyllysine). Residues Lys-578 and Lys-662 each carry the N6-succinyllysine modification. The 113-residue stretch at 623-735 (SALVFGEIGR…QMILKDYAKL (113 aa)) folds into the SCP2 domain. Lys-668 bears the N6-acetyllysine mark. Gln-705 is a substrate binding site. Lys-706 carries the post-translational modification N6-acetyllysine. Position 723 (Gln-723) interacts with substrate. Position 724 is an N6-succinyllysine (Lys-724). Residues 733–735 (AKL) carry the Microbody targeting signal motif.

The protein belongs to the short-chain dehydrogenases/reductases (SDR) family. In terms of assembly, homodimer. In terms of tissue distribution, present in many tissues with highest concentrations in liver and kidney.

It is found in the peroxisome. The enzyme catalyses a (3R)-3-hydroxyacyl-CoA + NAD(+) = a 3-oxoacyl-CoA + NADH + H(+). The catalysed reaction is (24R,25R)-3alpha,7alpha,12alpha,24-tetrahydroxy-5beta-cholestan-26-oyl-CoA = (24E)-3alpha,7alpha,12alpha-trihydroxy-5beta-cholest-24-en-26-oyl-CoA + H2O. It catalyses the reaction a (3R)-3-hydroxyacyl-CoA = a (2E)-enoyl-CoA + H2O. It carries out the reaction (2E)-octenoyl-CoA + H2O = (3R)-hydroxyoctanoyl-CoA. The enzyme catalyses (3R)-hydroxyoctanoyl-CoA + NAD(+) = 3-oxooctanoyl-CoA + NADH + H(+). The catalysed reaction is (3R)-hydroxyhexadecanoyl-CoA + NAD(+) = 3-oxohexadecanoyl-CoA + NADH + H(+). It catalyses the reaction (2E)-hexadecenedioyl-CoA + H2O = (3R)-hydroxyhexadecanedioyl-CoA. It carries out the reaction (3R)-hydroxyhexadecanedioyl-CoA + NAD(+) = 3-oxohexadecanedioyl-CoA + NADH + H(+). The enzyme catalyses (3R)-hydroxyhexadecanoyl-CoA = (2E)-hexadecenoyl-CoA + H2O. The catalysed reaction is (3R)-3-hydroxydecanoyl-CoA = (2E)-decenoyl-CoA + H2O. It catalyses the reaction (3R)-3-hydroxydecanoyl-CoA + NAD(+) = 3-oxodecanoyl-CoA + NADH + H(+). It carries out the reaction (24R,25R)-3alpha,7alpha,12alpha,24-tetrahydroxy-5beta-cholestan-26-oyl-CoA + NAD(+) = 3alpha,7alpha,12alpha-trihydroxy-24-oxo-5beta-cholestan-26-oyl-CoA + NADH + H(+). It participates in lipid metabolism; fatty acid beta-oxidation. Bifunctional enzyme acting on the peroxisomal fatty acid beta-oxidation pathway. Catalyzes two of the four reactions in fatty acid degradation: hydration of 2-enoyl-CoA (trans-2-enoyl-CoA) to produce (3R)-3-hydroxyacyl-CoA, and dehydrogenation of (3R)-3-hydroxyacyl-CoA to produce 3-ketoacyl-CoA (3-oxoacyl-CoA), which is further metabolized by SCPx. Can use straight-chain and branched-chain fatty acids, as well as bile acid intermediates as substrates. This is Peroxisomal multifunctional enzyme type 2 from Mus musculus (Mouse).